The chain runs to 424 residues: Elongation factor Tu, mitochondrial (424 aa).

Residues 36-234 (KPHVNVGTIG…VLDTKIPLPH (199 aa)) form the tr-type G domain. The G1 stretch occupies residues 45–52 (GHVDHGKT). A GTP-binding site is contributed by 45 to 52 (GHVDHGKT). The segment at 86 to 90 (GITIT) is G2. The tract at residues 107 to 110 (DCPG) is G3. Residues 107-111 (DCPGH) and 162-165 (NKMD) contribute to the GTP site. The tract at residues 162-165 (NKMD) is G4. The interval 199 to 201 (AAA) is G5.

It belongs to the TRAFAC class translation factor GTPase superfamily. Classic translation factor GTPase family. EF-Tu/EF-1A subfamily.

The protein localises to the mitochondrion. Its function is as follows. This protein promotes the GTP-dependent binding of aminoacyl-tRNA to the A-site of ribosomes during protein biosynthesis. The chain is Elongation factor Tu, mitochondrial (tufm) from Dictyostelium discoideum (Social amoeba).